A 512-amino-acid polypeptide reads, in one-letter code: UDP-N-acetylmuramate--L-alanine ligase (512 aa).

132–138 (GAHGKTT) contributes to the ATP binding site.

The protein belongs to the MurCDEF family.

The protein resides in the cytoplasm. The catalysed reaction is UDP-N-acetyl-alpha-D-muramate + L-alanine + ATP = UDP-N-acetyl-alpha-D-muramoyl-L-alanine + ADP + phosphate + H(+). It functions in the pathway cell wall biogenesis; peptidoglycan biosynthesis. In terms of biological role, cell wall formation. In Bifidobacterium longum (strain NCC 2705), this protein is UDP-N-acetylmuramate--L-alanine ligase.